The primary structure comprises 245 residues: Derlin-1 (245 aa).

Topologically, residues 1–17 (MDAGVWYRSLPRFTRYW) are cytoplasmic. A helical membrane pass occupies residues 18 to 38 (LTATVVLSMLCRFDVIPLHWL). The Lumenal segment spans residues 39–58 (HLDRSAVFSKLQLWRCMTSL). Residues 59–79 (FVFPISSNTAFHFLINCFFIV) form a helical membrane-spanning segment. Residues 80–99 (QYSSKLEKDQYSRSPADYLY) lie on the Cytoplasmic side of the membrane. A helical membrane pass occupies residues 100 to 120 (LLIVSAVLANIGGMIFNVYFL). Residues 121 to 156 (MDTLVLAITYIWCQLNKDVTVSFWFGTRFKAMYLPW) are Lumenal-facing. Residues 157-177 (VLAAFEFIFHFSLASLVGIFV) form a helical membrane-spanning segment. Residues 178–245 (GHVYYFFKFQ…WGRGMTLGRN (68 aa)) lie on the Cytoplasmic side of the membrane. Residues 218–245 (FGLPPESRAPPRQATESPWGRGMTLGRN) are disordered.

Belongs to the derlin family.

It localises to the endoplasmic reticulum membrane. In terms of biological role, may be involved in the degradation process of specific misfolded endoplasmic reticulum (ER) luminal proteins. May also involved in endoplasmic reticulum stress-induced pre-emptive quality control, a mechanism that selectively attenuates the translocation of newly synthesized proteins into the endoplasmic reticulum and reroutes them to the cytosol for proteasomal degradation. The protein is Derlin-1 of Drosophila melanogaster (Fruit fly).